We begin with the raw amino-acid sequence, 382 residues long: S-adenosylmethionine synthase (382 aa).

Histidine 15 contacts ATP. Aspartate 17 is a binding site for Mg(2+). Glutamate 43 contacts K(+). Residues glutamate 56 and glutamine 99 each contribute to the L-methionine site. A flexible loop region spans residues 99 to 109; sequence QSPDINQGVDR. ATP is bound by residues 164–166, 230–231, aspartate 239, 245–246, alanine 262, and lysine 266; these read DAK, RF, and RK. Residue aspartate 239 participates in L-methionine binding. Lysine 270 contributes to the L-methionine binding site.

The protein belongs to the AdoMet synthase family. In terms of assembly, homotetramer; dimer of dimers. Requires Mg(2+) as cofactor. The cofactor is K(+).

It is found in the cytoplasm. The catalysed reaction is L-methionine + ATP + H2O = S-adenosyl-L-methionine + phosphate + diphosphate. It participates in amino-acid biosynthesis; S-adenosyl-L-methionine biosynthesis; S-adenosyl-L-methionine from L-methionine: step 1/1. In terms of biological role, catalyzes the formation of S-adenosylmethionine (AdoMet) from methionine and ATP. The overall synthetic reaction is composed of two sequential steps, AdoMet formation and the subsequent tripolyphosphate hydrolysis which occurs prior to release of AdoMet from the enzyme. In Psychromonas ingrahamii (strain DSM 17664 / CCUG 51855 / 37), this protein is S-adenosylmethionine synthase.